Consider the following 209-residue polypeptide: Uracil phosphoribosyltransferase (209 aa).

Residues Arg-79, Arg-104, and 131-139 (DPMLATGGS) each bind 5-phospho-alpha-D-ribose 1-diphosphate. Residues Ile-194 and 199 to 201 (GDA) contribute to the uracil site. A 5-phospho-alpha-D-ribose 1-diphosphate-binding site is contributed by Asp-200.

It belongs to the UPRTase family. Requires Mg(2+) as cofactor.

The enzyme catalyses UMP + diphosphate = 5-phospho-alpha-D-ribose 1-diphosphate + uracil. It functions in the pathway pyrimidine metabolism; UMP biosynthesis via salvage pathway; UMP from uracil: step 1/1. Allosterically activated by GTP. Catalyzes the conversion of uracil and 5-phospho-alpha-D-ribose 1-diphosphate (PRPP) to UMP and diphosphate. The protein is Uracil phosphoribosyltransferase of Streptococcus agalactiae serotype III (strain NEM316).